The following is a 294-amino-acid chain: HTH-type transcriptional activator AmpR (294 aa).

Residues 6 to 63 (IPLNSLRAFEAAARQLSFTKAAIELNVTHAAISQQVKALEQRLNCRLFIRISRGLVLT) form the HTH lysR-type domain. Positions 23–42 (FTKAAIELNVTHAAISQQVK) form a DNA-binding region, H-T-H motif.

The protein belongs to the LysR transcriptional regulatory family.

The protein localises to the cytoplasm. In terms of biological role, this protein is a positive regulator of gene expression of beta-lactamase (AmpC). The sequence is that of HTH-type transcriptional activator AmpR (ampR) from Yersinia enterocolitica.